The primary structure comprises 164 residues: Peptide deformylase (164 aa).

Positions 87 and 129 each coordinate Fe cation. Glutamate 130 is a catalytic residue. Position 133 (histidine 133) interacts with Fe cation.

Belongs to the polypeptide deformylase family. Fe(2+) is required as a cofactor.

The enzyme catalyses N-terminal N-formyl-L-methionyl-[peptide] + H2O = N-terminal L-methionyl-[peptide] + formate. Functionally, removes the formyl group from the N-terminal Met of newly synthesized proteins. Requires at least a dipeptide for an efficient rate of reaction. N-terminal L-methionine is a prerequisite for activity but the enzyme has broad specificity at other positions. This is Peptide deformylase from Thermotoga sp. (strain RQ2).